The chain runs to 824 residues: Cell division cycle protein 27 homolog (824 aa).

TPR repeat units follow at residues 6–35 (EPVQAAIWQALNHYAYRDAVFLAERLYAEV), 38–65 (EEALFLLATCYYRSGKAYKAYRLLKGHS), 67–99 (TTPQCKYLLAKCCVDLSKLAEGEQILSGGVFNK), and 115–145 (CFTLSLLGHVYCKTDRLAKGSECYQKSLSLN). Thr205, Thr209, and Thr244 each carry phosphothreonine. The disordered stretch occupies residues 287–422 (LETPSPGDGS…TNKGGITQPN (136 aa)). Ser291 carries the phosphoserine modification. At Thr313 the chain carries Phosphothreonine. A compositionally biased stretch (polar residues) spans 326-341 (QTGTKSVFSQSGNSRE). The residue at position 339 (Ser339) is a Phosphoserine. Residues 348–361 (QTQSSGPQTSTTPQ) show a composition bias toward low complexity. The span at 362-371 (VLSPTITSPP) shows a compositional bias: polar residues. The residue at position 366 (Thr366) is a Phosphothreonine. Phosphoserine occurs at positions 379 and 386. The span at 380 to 390 (RLFTSDSSTTK) shows a compositional bias: polar residues. Over residues 395 to 413 (KLKMKFPPKIPNRKTKSKT) the composition is skewed to basic residues. A Phosphoserine modification is found at Ser426. Thr430 carries the phosphothreonine modification. Residues Ser435 and Ser438 each carry the phosphoserine modification. Thr446 bears the Phosphothreonine mark. 9 TPR repeats span residues 465 to 495 (LLREMGKGYLALCSYNCKEAINILSHLPSHH), 499 to 528 (GWVLCQIGRAYFELSEYMQAERIFSEVRRI), 533 to 563 (VEGMEIYSTTLWHLQKDVALSVLSKDLTDMD), 567 to 598 (PEAWCAAGNCFSLQREHDIAIKFFQRAIQVDP), 601 to 631 (AYAYTLLGHEFVLTEELDKALACFRNAIRVN), 635 to 667 (YNAWYGLGMIYYKQEKFSLAEMHFQKALDINPQ), 670 to 702 (VLLCHIGVVQHALKKSEKALDTLNKAIVIDPKN), 704 to 734 (LCKFHRASVLFANEKYKSALQELEELKQIVP), and 737 to 768 (SLVYFLIGKVYKKLGQTHLALMNFSWAMDLDP). The interval 781–824 (KRYLPDDEEPITQEEQIMGTDESQESSMTDADDTQLHAAESDEF) is disordered. Position 821 is a phosphoserine (Ser821).

The protein belongs to the APC3/CDC27 family. As to quaternary structure, homodimer. The mammalian APC/C is composed at least of 14 distinct subunits ANAPC1, ANAPC2, CDC27/APC3, ANAPC4, ANAPC5, CDC16/APC6, ANAPC7, CDC23/APC8, ANAPC10, ANAPC11, CDC26/APC12, ANAPC13, ANAPC15 and ANAPC16 that assemble into a complex of at least 19 chains with a combined molecular mass of around 1.2 MDa; APC/C interacts with FZR1 and FBXO5. Interacts with RB. Interacts with FAM168B/MANI. Interacts with MCPH1. In terms of processing, phosphorylated. Phosphorylation on Ser-426 and Thr-446 occurs specifically during mitosis.

The protein resides in the nucleus. Its subcellular location is the cytoplasm. The protein localises to the cytoskeleton. It is found in the spindle. The protein operates within protein modification; protein ubiquitination. Its function is as follows. Component of the anaphase promoting complex/cyclosome (APC/C), a cell cycle-regulated E3 ubiquitin ligase that controls progression through mitosis and the G1 phase of the cell cycle. The APC/C complex acts by mediating ubiquitination and subsequent degradation of target proteins: it mainly mediates the formation of 'Lys-11'-linked polyubiquitin chains and, to a lower extent, the formation of 'Lys-48'- and 'Lys-63'-linked polyubiquitin chains. The APC/C complex catalyzes assembly of branched 'Lys-11'-/'Lys-48'-linked branched ubiquitin chains on target proteins. This is Cell division cycle protein 27 homolog (CDC27) from Homo sapiens (Human).